A 363-amino-acid chain; its full sequence is 3-dehydroquinate synthase (363 aa).

Residues G107–D111, T131–T132, K144, and K153 each bind NAD(+). The Zn(2+) site is built by E186, H251, and H268.

Belongs to the sugar phosphate cyclases superfamily. Dehydroquinate synthase family. Co(2+) serves as cofactor. Zn(2+) is required as a cofactor. The cofactor is NAD(+).

The protein localises to the cytoplasm. It catalyses the reaction 7-phospho-2-dehydro-3-deoxy-D-arabino-heptonate = 3-dehydroquinate + phosphate. It participates in metabolic intermediate biosynthesis; chorismate biosynthesis; chorismate from D-erythrose 4-phosphate and phosphoenolpyruvate: step 2/7. In terms of biological role, catalyzes the conversion of 3-deoxy-D-arabino-heptulosonate 7-phosphate (DAHP) to dehydroquinate (DHQ). The protein is 3-dehydroquinate synthase of Nostoc punctiforme (strain ATCC 29133 / PCC 73102).